The primary structure comprises 181 residues: Photosystem I assembly protein Ycf4 (181 aa).

2 helical membrane-spanning segments follow: residues 19–39 (YFWAFFLLVGGLGFLLAGISS) and 62–82 (VMMFYGALSLGISIYTLLTII).

It belongs to the Ycf4 family.

It localises to the plastid. The protein resides in the chloroplast thylakoid membrane. Its function is as follows. Seems to be required for the assembly of the photosystem I complex. The sequence is that of Photosystem I assembly protein Ycf4 from Phaeodactylum tricornutum (strain CCAP 1055/1).